A 364-amino-acid polypeptide reads, in one-letter code: DNA replication and repair protein RecF (364 aa).

30 to 37 is an ATP binding site; sequence GNNGQGKT.

Belongs to the RecF family.

The protein localises to the cytoplasm. In terms of biological role, the RecF protein is involved in DNA metabolism; it is required for DNA replication and normal SOS inducibility. RecF binds preferentially to single-stranded, linear DNA. It also seems to bind ATP. This Citrifermentans bemidjiense (strain ATCC BAA-1014 / DSM 16622 / JCM 12645 / Bem) (Geobacter bemidjiensis) protein is DNA replication and repair protein RecF.